We begin with the raw amino-acid sequence, 298 residues long: tRNA-uridine aminocarboxypropyltransferase 2 (298 aa).

Residue methionine 1 is modified to N-acetylmethionine. The tract at residues 1–52 (MESQKEARILQEPVARPPGASRSQTPNAKERQEGGPVPAAAALGAEADDDSA) is disordered. At serine 132 the chain carries Phosphoserine. The DXTW motif lies at 178–181 (DGTW).

This sequence belongs to the TDD superfamily. DTWD2 family.

Its subcellular location is the nucleus. It localises to the cytoplasm. It carries out the reaction a uridine in tRNA + S-adenosyl-L-methionine = a 3-[(3S)-3-amino-3-carboxypropyl]uridine in tRNA + S-methyl-5'-thioadenosine + H(+). In terms of biological role, catalyzes the formation of 3-(3-amino-3-carboxypropyl)uridine (acp3U) at position 20a in the D-loop of several cytoplasmic tRNAs (acp3U(20a)). Also has a weak activity to form acp3U at position 20 in the D-loop of tRNAs (acp3U(20)). Involved in glycoRNA biosynthesis by mediating formation of acp3U, which acts as an attachment site for N-glycans on tRNAs. GlycoRNAs consist of RNAs modified with secretory N-glycans that are presented on the cell surface. The chain is tRNA-uridine aminocarboxypropyltransferase 2 from Macaca fascicularis (Crab-eating macaque).